The chain runs to 290 residues: Undecaprenyl-diphosphatase (290 aa).

Transmembrane regions (helical) follow at residues 1–21 (MFLLELIKGIILGIVEGLTEF), 48–68 (SAFTFKVVIQLGSVFAAAWVF), 101–121 (IHVLVGMVPAGILGFLFDDLI), 125–145 (LFSVPTVLIGLFIGAIYMIIA), 161–181 (INYFQAFVIGISQAIAMWPGF), 202–222 (SDFTFIMSVPIMLAASGLSLL), 231–251 (AHIPFYILGFLAAFIVGLIAI), and 266–286 (FAIYRIVLVIFIAILYFGFGI).

This sequence belongs to the UppP family.

It localises to the cell membrane. It catalyses the reaction di-trans,octa-cis-undecaprenyl diphosphate + H2O = di-trans,octa-cis-undecaprenyl phosphate + phosphate + H(+). Catalyzes the dephosphorylation of undecaprenyl diphosphate (UPP). Confers resistance to bacitracin. This chain is Undecaprenyl-diphosphatase, found in Staphylococcus epidermidis (strain ATCC 35984 / DSM 28319 / BCRC 17069 / CCUG 31568 / BM 3577 / RP62A).